Here is a 296-residue protein sequence, read N- to C-terminus: POM121-like protein 12 (296 aa).

Disordered regions lie at residues 1–54 and 142–162; these read MGAA…SPWP and APPE…RPAG. Residues 34 to 52 are compositionally biased toward low complexity; that stretch reads SRSPSTPQTTPSPQGRQSP.

The protein belongs to the POM121 family.

This Homo sapiens (Human) protein is POM121-like protein 12 (POM121L12).